The following is a 416-amino-acid chain: Probable 26S proteasome regulatory subunit rpn-6.2 (416 aa).

In terms of domain architecture, PCI spans 217–386 (YKTSFSYFYE…DTVVVYPKAD (170 aa)).

Belongs to the proteasome subunit S9 family. In terms of assembly, component of the lid subcomplex of the 19S proteasome regulatory particle complex (also named PA700 complex). The 26S proteasome consists of a 20S proteasome core and two 19S regulatory subunits.

Functionally, component of the lid subcomplex of the 26S proteasome, a multiprotein complex involved in the ATP-dependent degradation of ubiquitinated proteins. In the complex, rpn-6.2 is required for proteasome assembly. This chain is Probable 26S proteasome regulatory subunit rpn-6.2 (rpn-6.2), found in Caenorhabditis elegans.